We begin with the raw amino-acid sequence, 231 residues long: Quercetin 2,3-dioxygenase (231 aa).

A divalent metal cation-binding residues include His-57, His-59, His-101, and Glu-103.

This sequence belongs to the pirin family. Zn(2+) serves as cofactor. The cofactor is Co(2+). Requires Fe(2+) as cofactor.

The catalysed reaction is quercetin + O2 = 2-(3,4-dihydroxybenzoyloxy)-4,6-dihydroxybenzoate + CO. Its pathway is flavonoid metabolism; quercetin degradation. With respect to regulation, inhibited by kojic acid, sodium diethyldithiocarbamate and 1,10-phenanthroline monohydrochloride. Functionally, has quercetin 2,3-dioxygenase activity in vitro. Its physiological role is unknown; however, may provide a mechanism that would avoid inhibition of key cellular proteins, such as DNA gyrase, by quercetin. This chain is Quercetin 2,3-dioxygenase (yhhW), found in Escherichia coli (strain K12).